The sequence spans 904 residues: MHQGAPSWGRRWFVVWALLGLTLGVLVASAAPTSPGTPGVAAATQAANGGPATPAPPPLGAAPTGDPKPKKNKKPKNPTPPRPAGDNATVAAGHATLREHLRDIKAENTDANFYVCPPPTGATVVQFEQPRRCPTRPEGQNYTEGIAVVFKENIAPYKFKATMYYKDVTVSQVWFGHRYSQFMGIFEDRAPVPFEEVIDKINAKGVCRSTAKYVRNNLETTAFHRDDHETDMELKPANAATRTSRGWHTTDLKYNPSRVEAFHRYGTTVNCIVEEVDARSVYPYDEFVLATGDFVYMSPFYGYREGSHTEHTTYAADRFKQVDGFYARDLTTKARATAPTTRNLLTTPKFTVAWDWVPKRPSVCTMTKWQEVDEMLRSEYGGSFRFSSDAISTTFTTNLTEYPLSRVDLGDCIGKDARDAMDRIFARRYNATHIKVGQPQYYQANGGFLIAYQPLLSNTLAELYVREHLREQSRKPPNPTPPPPGASANASVERIKTTSSIEFARLQFTYNHIQRHVNDMLGRVAIAWCELQNHELTLWNEARKLNPNAIASVTVGRRVSARMLGDVMAVSTCVPVAADNVIVQNSMRISSRPGACYSRPLVSFRYEDQGPLVEGQLGENNELRLTRDAIEPCTVGHRRYFTFGGGYVYFEEYAYSHQLSRADITTVSTFIDLNITMLEDHEFVPLEVYTRHEIKDSGLLDYTEVQRRNQLHDLRFADIDTVIHADANAAMFAGLGAFFEGMGDLGRAVGKVVMGIVGGVVSAVSGVSSFMSNPFGALAVGLLVLAGLAAAFFAFRYVMRLQSNPMKALYPLTTKELKNPTNPDASGEGEEGGDFDEAKLAEAREMIRYMALVSAMERTEHKAKKKGTSALLSAKVTDMVMRKRRNTNYTQVPNKDGDADEDDL.

The first 30 residues, 1–30, serve as a signal peptide directing secretion; sequence MHQGAPSWGRRWFVVWALLGLTLGVLVASA. The Virion surface portion of the chain corresponds to 31 to 774; the sequence is APTSPGTPGV…SGVSSFMSNP (744 aa). The span at 32-52 shows a compositional bias: low complexity; that stretch reads PTSPGTPGVAAATQAANGGPA. Positions 32–88 are disordered; that stretch reads PTSPGTPGVAAATQAANGGPATPAPPPLGAAPTGDPKPKKNKKPKNPTPPRPAGDNA. Asn87 and Asn141 each carry an N-linked (GlcNAc...) asparagine; by host glycan. Disulfide bonds link Cys116–Cys573, Cys133–Cys529, Cys207–Cys271, Cys364–Cys412, and Cys596–Cys633. 2 involved in fusion and/or binding to host membrane regions span residues 173-179 and 258-265; these read VWFGHRY and RVEAFHRY. N-linked (GlcNAc...) asparagine; by host glycosylation is found at Asn398 and Asn430. Positions 470 to 492 are disordered; it reads REQSRKPPNPTPPPPGASANASV. Positions 476-485 are enriched in pro residues; that stretch reads PPNPTPPPPG. The N-linked (GlcNAc...) asparagine; by host glycan is linked to Asn489. N-linked (GlcNAc...) asparagine; by host glycosylation is present at Asn674. The segment at 719 to 772 is hydrophobic membrane proximal region; it reads IDTVIHADANAAMFAGLGAFFEGMGDLGRAVGKVVMGIVGGVVSAVSGVSSFMS. A helical transmembrane segment spans residues 775–795; the sequence is FGALAVGLLVLAGLAAAFFAF. Over 796–904 the chain is Intravirion; the sequence is RYVMRLQSNP…KDGDADEDDL (109 aa). Residues 849-852 carry the Golgi targeting motif; that stretch reads YMAL. The disordered stretch occupies residues 883 to 904; it reads KRRNTNYTQVPNKDGDADEDDL. A Phosphothreonine; by host modification is found at Thr887. Residues 889–892 carry the Internalization motif motif; the sequence is YTQV.

It belongs to the herpesviridae glycoprotein B family. As to quaternary structure, homotrimer; disulfide-linked. Interacts with host receptor MYH9/NMMHC-IIA. Interacts with host receptor MYH10/NMMHC-IIB. Binds to heparan sulfate proteoglycans. Interacts with gH/gL heterodimer. Interacts with the host coreceptor PILRA. The cytoplasmic tail is phosphorylated by the viral kinase US3. Phosphorylation may be linked to a down-regulation of gB expression on cell surface. Post-translationally, ubiquitinated.

Its subcellular location is the virion membrane. The protein localises to the host cell membrane. The protein resides in the host endosome membrane. It is found in the host Golgi apparatus membrane. Functionally, envelope glycoprotein that forms spikes at the surface of virion envelope and binds to the host cell entry receptors MYH9/NMMHC-IIA and MYH10/NMMHC-IIB, promoting the virus entry into host cells. Essential for the initial attachment to heparan sulfate moieties of the host cell surface proteoglycans. Involved in fusion of viral and cellular membranes leading to virus entry into the host cell: following initial binding to its host cell entry receptors, membrane fusion is mediated by the fusion machinery composed at least of gB and the heterodimer gH/gL. May be involved in the fusion between the virion envelope and the outer nuclear membrane during virion egress. Also plays a role, together with gK, in virus-induced cell-to-cell fusion (syncytia formation). The polypeptide is Envelope glycoprotein B (Human herpesvirus 1 (strain KOS) (HHV-1)).